The sequence spans 83 residues: Mitochondrial import inner membrane translocase subunit Tim8 B (83 aa).

A2 carries the post-translational modification N-acetylalanine. The short motif at 36–59 is the Twin CX3C motif element; that stretch reads CWDKCVEKPGNRLDSRTENCLSSC. Disulfide bonds link C36–C59 and C40–C55.

The protein belongs to the small Tim family. Heterohexamer; possibly composed of 3 copies of TIMM8B and 3 copies of TIMM13, named soluble 70 kDa complex. Associates with the TIM22 complex, whose core is composed of TIMM22.

The protein localises to the mitochondrion inner membrane. In terms of biological role, probable mitochondrial intermembrane chaperone that participates in the import and insertion of some multi-pass transmembrane proteins into the mitochondrial inner membrane. Also required for the transfer of beta-barrel precursors from the TOM complex to the sorting and assembly machinery (SAM complex) of the outer membrane. Acts as a chaperone-like protein that protects the hydrophobic precursors from aggregation and guide them through the mitochondrial intermembrane space. The sequence is that of Mitochondrial import inner membrane translocase subunit Tim8 B (TIMM8B) from Bos taurus (Bovine).